The following is a 381-amino-acid chain: Pre-mRNA-splicing factor cwf28 (381 aa).

A disordered region spans residues 1–21; sequence MKRKAVLEAFSDSEDEDEKKL. Phosphoserine occurs at positions 11 and 13. Residues 104–157 adopt a coiled-coil conformation; it reads AADNEIVDWKANNSNEKAQNKIATNKESTDILPEEVQLVLNDLNDDVKSANSAN. The tract at residues 262 to 381 is disordered; that stretch reads LNSQNEHTEV…DRSYRSTRTL (120 aa). Residues 274-285 show a composition bias toward polar residues; it reads KSNSIDNLTPSS. 2 positions are modified to phosphoserine: Ser275 and Ser277. Basic and acidic residues-rich tracts occupy residues 287–297, 306–332, and 362–375; these read LFRKRSRDNNL, KHLDYNSRNYNKRDRDPDRTKYREYHS, and SDRYTERENPDRSY.

The protein belongs to the SPP2 family. Belongs to the 40S cdc5-associated complex (or cwf complex), a spliceosome sub-complex reminiscent of a late-stage spliceosome composed of the U2, U5 and U6 snRNAs and at least brr2, cdc5, cwf2/prp3, cwf3/syf1, cwf4/syf3, cwf5/ecm2, spp42/cwf6, cwf7/spf27, cwf8, cwf9, cwf10, cwf11, cwf12, prp45/cwf13, cwf14, cwf15, cwf16, cwf17, cwf18, cwf19, cwf20, cwf21, cwf22, cwf23, cwf24, cwf25, cwf26, cyp7/cwf27, cwf28, cwf29/ist3, lea1, msl1, prp5/cwf1, prp10, prp12/sap130, prp17, prp22, sap61, sap62, sap114, sap145, slu7, smb1, smd1, smd3, smf1, smg1 and syf2.

The protein localises to the nucleus. Its function is as follows. Involved in spliceosome maturation and the first step of pre-mRNA splicing. In Schizosaccharomyces pombe (strain 972 / ATCC 24843) (Fission yeast), this protein is Pre-mRNA-splicing factor cwf28 (cwf28).